The primary structure comprises 104 residues: Snakin-2 (104 aa).

The signal sequence occupies residues 1 to 23 (MAISKALFASLLLSLLLLEQVQS). Residues 24–38 (IQTDQVTSNAISEAA) constitute a propeptide, removed in mature form.

Belongs to the GASA family. In terms of processing, six disulfide bonds may be present. As to expression, expressed in tubers, stems, flowers, shoot apex and leaves, but not in roots or stolons.

It is found in the secreted. It localises to the cell wall. Has an antimicrobial activity. Causes a rapid aggregation of both Gram-positive and Gram-negative bacteria, but the antimicrobial activity is not correlated with the capacity to aggregate bacteria. This is Snakin-2 (SN2) from Solanum tuberosum (Potato).